The sequence spans 187 residues: Transcriptional repressor NrdR (187 aa).

The tract at residues 1–21 (MQCPYCQHTNSRVLESRSSEG) is disordered. A zinc finger spans residues 3–34 (CPYCQHTNSRVLESRSSEGGQSIRRRRECLNC). The ATP-cone domain occupies 49 to 139 (ITVIKHDGKK…VYGRFKGIKD (91 aa)). Polar residues-rich tracts occupy residues 152-162 (ISSPMSQWSKS) and 170-187 (SQTSPCLSLTHNGSENSR). The disordered stretch occupies residues 152–187 (ISSPMSQWSKSSTRDRDQSQTSPCLSLTHNGSENSR).

The protein belongs to the NrdR family. Zn(2+) is required as a cofactor.

Functionally, negatively regulates transcription of bacterial ribonucleotide reductase nrd genes and operons by binding to NrdR-boxes. The sequence is that of Transcriptional repressor NrdR from Crocosphaera subtropica (strain ATCC 51142 / BH68) (Cyanothece sp. (strain ATCC 51142)).